A 360-amino-acid polypeptide reads, in one-letter code: Photosystem II protein D1 (360 aa).

A run of 3 helical transmembrane segments spans residues 29–46, 118–133, and 142–156; these read YIGW…TATT, HFLL…EWEF, and WISV…AASA. Chlorophyll a is bound at residue histidine 118. Tryptophan 126 contacts pheophytin a. The [CaMn4O5] cluster site is built by aspartate 170 and glutamate 189. Residues 197-218 form a helical membrane-spanning segment; that stretch reads FHQLGVAGVFGGSLFSAMHGSL. Histidine 198 provides a ligand contact to chlorophyll a. A quinone contacts are provided by residues histidine 215 and 264 to 265; that span reads SF. Position 215 (histidine 215) interacts with Fe cation. Histidine 272 is a Fe cation binding site. Residues 274 to 288 form a helical membrane-spanning segment; sequence FLGLWPVVGIWFTAL. Residues histidine 332, glutamate 333, aspartate 342, and alanine 344 each contribute to the [CaMn4O5] cluster site. The propeptide occupies 345–360; sequence SGESLPVALTAPAVIG.

The protein belongs to the reaction center PufL/M/PsbA/D family. In terms of assembly, PSII is composed of 1 copy each of membrane proteins PsbA, PsbB, PsbC, PsbD, PsbE, PsbF, PsbH, PsbI, PsbJ, PsbK, PsbL, PsbM, PsbT, PsbX, PsbY, PsbZ, Psb30/Ycf12, at least 3 peripheral proteins of the oxygen-evolving complex and a large number of cofactors. It forms dimeric complexes. Requires The D1/D2 heterodimer binds P680, chlorophylls that are the primary electron donor of PSII, and subsequent electron acceptors. It shares a non-heme iron and each subunit binds pheophytin, quinone, additional chlorophylls, carotenoids and lipids. D1 provides most of the ligands for the Mn4-Ca-O5 cluster of the oxygen-evolving complex (OEC). There is also a Cl(-1) ion associated with D1 and D2, which is required for oxygen evolution. The PSII complex binds additional chlorophylls, carotenoids and specific lipids. as cofactor. In terms of processing, tyr-161 forms a radical intermediate that is referred to as redox-active TyrZ, YZ or Y-Z. C-terminally processed by CTPA; processing is essential to allow assembly of the oxygen-evolving complex and thus photosynthetic growth.

The protein resides in the plastid. It localises to the chloroplast thylakoid membrane. It catalyses the reaction 2 a plastoquinone + 4 hnu + 2 H2O = 2 a plastoquinol + O2. Functionally, photosystem II (PSII) is a light-driven water:plastoquinone oxidoreductase that uses light energy to abstract electrons from H(2)O, generating O(2) and a proton gradient subsequently used for ATP formation. It consists of a core antenna complex that captures photons, and an electron transfer chain that converts photonic excitation into a charge separation. The D1/D2 (PsbA/PsbD) reaction center heterodimer binds P680, the primary electron donor of PSII as well as several subsequent electron acceptors. The polypeptide is Photosystem II protein D1 (Guillardia theta (Cryptophyte)).